The following is a 106-amino-acid chain: PAT complex subunit Asterix (106 aa).

The segment at 1–29 (MSANNMSDPRRPNKVLRYKPPPSECNPAL) is disordered. S2 carries the post-translational modification N-acetylserine. The Cytoplasmic portion of the chain corresponds to 2 to 32 (SANNMSDPRRPNKVLRYKPPPSECNPALDDP). Residues 33–51 (TPDYMNLLGMIFSMCGLML) traverse the membrane as a helical segment. Residue K52 is a topological domain, lumenal. The helical transmembrane segment at 53 to 70 (LKWCAWVAVYCSFISFAN) threads the bilayer. At 71–74 (SRSS) the chain is on the cytoplasmic side. A helical transmembrane segment spans residues 75-95 (EDTKQMMSSFMLSISAVVMSY). Residues 96–106 (LQNPQPMTPPW) lie on the Lumenal side of the membrane.

It belongs to the Asterix family. Component of the PAT complex, composed of WDR83OS/Asterix and CCDC47. The PAT complex is part of the multi-pass translocon (MPT) complex, composed of three subcomplexes, the GEL complex (composed of RAB5IF/OPTI and TMCO1), the BOS complex (composed of NCLN/Nicalin, NOMO1 and TMEM147) and the PAT complex (composed of WDR83OS/Asterix and CCDC47). The MPT complex associates with the SEC61 complex.

It localises to the endoplasmic reticulum membrane. Component of the multi-pass translocon (MPT) complex that mediates insertion of multi-pass membrane proteins into the lipid bilayer of membranes. The MPT complex takes over after the SEC61 complex: following membrane insertion of the first few transmembrane segments of proteins by the SEC61 complex, the MPT complex occludes the lateral gate of the SEC61 complex to promote insertion of subsequent transmembrane regions. Within the MPT complex, the PAT subcomplex sequesters any highly polar regions in the transmembrane domains away from the non-polar membrane environment until they can be buried in the interior of the fully assembled protein. Within the PAT subcomplex, WDR83OS/Asterix binds to and redirects the substrate to a location behind the SEC61 complex. This chain is PAT complex subunit Asterix (WDR83OS), found in Bos taurus (Bovine).